The following is a 457-amino-acid chain: Omega-hydroxypalmitate O-feruloyl transferase (457 aa).

Active-site proton acceptor residues include His-184 and Asp-404.

It belongs to the plant acyltransferase family. As to expression, expressed in roots, seedlings, leaves, stems, flowers and siliques. Detected at the protein level in roots and in seed coats.

The catalysed reaction is 16-hydroxyhexadecanoate + (E)-feruloyl-CoA = 16-feruloyloxyhexadecanoate + CoA. Involved in the synthesis of aromatics of the suberin polymer. Specifically affects the accumulation of the ferulate constituent of suberin in roots and seeds, but has no effect on the content of p-coumarate or sinapate. The protein is Omega-hydroxypalmitate O-feruloyl transferase (HHT1) of Arabidopsis thaliana (Mouse-ear cress).